A 259-amino-acid polypeptide reads, in one-letter code: Tubulin-specific chaperone C (259 aa).

The region spanning 112–241 is the C-CAP/cofactor C-like domain; that stretch reads PEVYFENDTL…DEHPILDFTW (130 aa).

This sequence belongs to the TBCC family.

It localises to the cytoplasm. Its subcellular location is the cytoskeleton. Functionally, tubulin-folding protein; involved in the final step of the tubulin folding pathway. This Schizosaccharomyces pombe (strain 972 / ATCC 24843) (Fission yeast) protein is Tubulin-specific chaperone C (cin2).